The sequence spans 304 residues: Type II restriction enzyme LlaDCHI (304 aa).

This sequence belongs to the DpnII type II restriction endonuclease family.

It catalyses the reaction Endonucleolytic cleavage of DNA to give specific double-stranded fragments with terminal 5'-phosphates.. Functionally, a P subtype restriction enzyme that recognizes the double-stranded unmethylated sequence 5'-GATC-3' and cleaves before G-1. This Lactococcus lactis subsp. cremoris (Streptococcus cremoris) protein is Type II restriction enzyme LlaDCHI (llaDCHIR).